The following is a 945-amino-acid chain: Probable inorganic carbon transporter subunit DabA (945 aa).

Residues C408, D410, H651, and C666 each contribute to the Zn(2+) site.

It belongs to the inorganic carbon transporter (TC 9.A.2) DabA family. In terms of assembly, forms a complex with DabB. It depends on Zn(2+) as a cofactor.

It localises to the cell inner membrane. In terms of biological role, part of an energy-coupled inorganic carbon pump. This Sulfurihydrogenibium azorense (strain DSM 15241 / OCM 825 / Az-Fu1) protein is Probable inorganic carbon transporter subunit DabA.